The following is a 651-amino-acid chain: Peptide-N(4)-(N-acetyl-beta-glucosaminyl)asparagine amidase (651 aa).

N-acetylalanine is present on Ala-2. The PUB domain occupies 30 to 91 (EASKLLLTYA…EGETHLIFPK (62 aa)). The Zn(2+) site is built by Cys-247, Cys-250, Cys-280, and Cys-283. Cys-306 functions as the Nucleophile in the catalytic mechanism. Residues His-333 and Asp-350 contribute to the active site. Positions 451–651 (ELGGRVSGSL…LEIIITFNDL (201 aa)) constitute a PAW domain.

This sequence belongs to the transglutaminase-like superfamily. PNGase family. As to quaternary structure, component of a complex required to couple retrotranslocation, ubiquitination and deglycosylation composed of NGLY1, SAKS1, AMFR, VCP and RAD23B. Interacts with the proteasome components RAD23B and PSMC1. Interacts with directly with VCP. Interacts with DERL1, bringing it close to the endoplasmic reticulum membrane. Interacts with SAKS1. Zn(2+) serves as cofactor. Ubiquitously expressed with highest level in testis.

It is found in the cytoplasm. It carries out the reaction Hydrolysis of an N(4)-(acetyl-beta-D-glucosaminyl)asparagine residue in which the glucosamine residue may be further glycosylated, to yield a (substituted) N-acetyl-beta-D-glucosaminylamine and a peptide containing an aspartate residue.. Inhibited by Z-VAD-fmk, a well-known caspase inhibitor, which inhibits enzyme activity through covalent binding of the carbohydrate to the single Cys-306 residue. Specifically deglycosylates the denatured form of N-linked glycoproteins in the cytoplasm and assists their proteasome-mediated degradation. Cleaves the beta-aspartyl-glucosamine (GlcNAc) of the glycan and the amide side chain of Asn, converting Asn to Asp. Prefers proteins containing high-mannose over those bearing complex type oligosaccharides. Can recognize misfolded proteins in the endoplasmic reticulum that are exported to the cytosol to be destroyed and deglycosylate them, while it has no activity toward native proteins. Deglycosylation is a prerequisite for subsequent proteasome-mediated degradation of some, but not all, misfolded glycoproteins. The polypeptide is Peptide-N(4)-(N-acetyl-beta-glucosaminyl)asparagine amidase (Ngly1) (Mus musculus (Mouse)).